We begin with the raw amino-acid sequence, 1191 residues long: Roquin-2 (1191 aa).

Zn(2+) contacts are provided by cysteine 14, cysteine 17, cysteine 33, histidine 35, cysteine 38, cysteine 50, and aspartate 53. An RING-type; degenerate zinc finger spans residues 14-54 (CPICYNEFDENVHKPISLGCSHTVCKTCLNKLHRKACPFDQ). The tract at residues 91-170 (ENKHYEVAKK…RTVTELILQH (80 aa)) is HEPN-N. The interval 171 to 325 (QNPQQLSANL…SIIDKLQSPE (155 aa)) is ROQ. The segment at 326–396 (SFAKSVQELT…GLVDFIQNYS (71 aa)) is HEPN-C. The segment at 410–438 (KYKTSMCRDLRQQGGCPRGTNCTFAHSQE) adopts a C3H1-type zinc-finger fold. Disordered regions lie at residues 528-576 (GANG…NSVP) and 644-680 (ESSL…PQPY). Residues 530-546 (NGQNAAGPSADSVTENK) are compositionally biased toward polar residues. The residue at position 549 (serine 549) is a Phosphoserine. Over residues 554–576 (PVSNVAATSAGPSNVGTELNSVP) the composition is skewed to polar residues. Phosphoserine is present on residues serine 808, serine 983, and serine 1119.

As to quaternary structure, interacts with EDC4. Interacts with CCR4-NOT deadenylase complex. Interacts with MAP3K5; the interaction is probably stimulus-dependent. In terms of processing, proteolytically cleaved after Arg-509 and Arg-585 by MALT1 in activated CD4(+) T cells; cleavage at Arg-509 and Arg-585 is critical for promoting RC3H1 degradation in response to T-cell receptor (TCR) stimulation, and hence is necessary for prolonging the stability of a set of mRNAs controlling Th17 cell differentiation. In terms of tissue distribution, expressed in spleen, testis, ovary and small intestine.

The protein localises to the cytoplasm. It localises to the P-body. The enzyme catalyses S-ubiquitinyl-[E2 ubiquitin-conjugating enzyme]-L-cysteine + [acceptor protein]-L-lysine = [E2 ubiquitin-conjugating enzyme]-L-cysteine + N(6)-ubiquitinyl-[acceptor protein]-L-lysine.. Its pathway is protein modification; protein ubiquitination. Its activity is regulated as follows. Binding to dsRNA, but not CDE RNA, crosstalks with the E3 ubiquitin ligase activity and may inhibit ubiquitination. Its function is as follows. Post-transcriptional repressor of mRNAs containing a conserved stem loop motif, called constitutive decay element (CDE), which is often located in the 3'-UTR, as in HMGXB3, ICOS, IER3, NFKBID, NFKBIZ, PPP1R10, TNF and in many more mRNAs. Binds to CDE and promotes mRNA deadenylation and degradation. This process does not involve miRNAs. In follicular helper T (Tfh) cells, represses of ICOS and TNFRSF4 expression, thus preventing spontaneous Tfh cell differentiation, germinal center B-cell differentiation in the absence of immunization and autoimmunity. In resting or LPS-stimulated macrophages, controls inflammation by suppressing TNF expression. Also recognizes CDE in its own mRNA and in that of paralogous RC3H1, possibly leading to feedback loop regulation. miRNA-binding protein that regulates microRNA homeostasis. Enhances DICER-mediated processing of pre-MIR146a but reduces mature MIR146a levels through an increase of 3' end uridylation. Both inhibits ICOS mRNA expression and they may act together to exert the suppression. Acts as a ubiquitin E3 ligase. Pairs with E2 enzymes UBE2B, UBE2D2, UBE2E2, UBE2E3, UBE2G2, UBE2K and UBE2Q2 and produces polyubiquitin chains. Shows the strongest activity when paired with UBE2N:UBE2V1 or UBE2N:UBE2V2 E2 complexes and generate both short and long polyubiquitin chains. Involved in the ubiquitination of MAP3K5. Able to interact with double-stranded RNA (dsRNA). The chain is Roquin-2 (RC3H2) from Homo sapiens (Human).